A 153-amino-acid polypeptide reads, in one-letter code: NADPH-dependent 7-cyano-7-deazaguanine reductase (153 aa).

Cysteine 51 acts as the Thioimide intermediate in catalysis. The Proton donor role is filled by aspartate 58. Substrate contacts are provided by residues 73–75 and 92–93; these read LES and HE.

It belongs to the GTP cyclohydrolase I family. QueF type 1 subfamily.

It localises to the cytoplasm. It catalyses the reaction 7-aminomethyl-7-carbaguanine + 2 NADP(+) = 7-cyano-7-deazaguanine + 2 NADPH + 3 H(+). The protein operates within tRNA modification; tRNA-queuosine biosynthesis. In terms of biological role, catalyzes the NADPH-dependent reduction of 7-cyano-7-deazaguanine (preQ0) to 7-aminomethyl-7-deazaguanine (preQ1). The protein is NADPH-dependent 7-cyano-7-deazaguanine reductase of Bradyrhizobium diazoefficiens (strain JCM 10833 / BCRC 13528 / IAM 13628 / NBRC 14792 / USDA 110).